The primary structure comprises 81 residues: Costars family protein ABRACL (81 aa).

This sequence belongs to the costars family.

In Danio rerio (Zebrafish), this protein is Costars family protein ABRACL (abracl).